The sequence spans 476 residues: Cysteine--tRNA ligase (476 aa).

Cys-27 contributes to the Zn(2+) binding site. The short motif at 29–39 is the 'HIGH' region element; it reads PTTYNYIHLGN. Zn(2+)-binding residues include Cys-207, His-232, and Glu-236. Positions 264–268 match the 'KMSKS' region motif; the sequence is KMSKS. Lys-267 serves as a coordination point for ATP.

This sequence belongs to the class-I aminoacyl-tRNA synthetase family. In terms of assembly, monomer. Zn(2+) is required as a cofactor.

The protein localises to the cytoplasm. The enzyme catalyses tRNA(Cys) + L-cysteine + ATP = L-cysteinyl-tRNA(Cys) + AMP + diphosphate. This Moorella thermoacetica (strain ATCC 39073 / JCM 9320) protein is Cysteine--tRNA ligase.